Reading from the N-terminus, the 113-residue chain is MRAEYKNMKSSVQKVNLVADMIRGKGVDVARSQLLFLKKALAKPLSKVLMSSVANAQNNFGVDPDNLYVKEVFVGKGMSLKRFAARARGRSASIRKHYSNVSILLGVLDGSKG.

The protein belongs to the universal ribosomal protein uL22 family. In terms of assembly, part of the 50S ribosomal subunit.

Functionally, this protein binds specifically to 23S rRNA; its binding is stimulated by other ribosomal proteins, e.g. L4, L17, and L20. It is important during the early stages of 50S assembly. It makes multiple contacts with different domains of the 23S rRNA in the assembled 50S subunit and ribosome. The globular domain of the protein is located near the polypeptide exit tunnel on the outside of the subunit, while an extended beta-hairpin is found that lines the wall of the exit tunnel in the center of the 70S ribosome. This chain is Large ribosomal subunit protein uL22, found in Neorickettsia sennetsu (strain ATCC VR-367 / Miyayama) (Ehrlichia sennetsu).